The primary structure comprises 252 residues: CLAVATA3/ESR (CLE)-related protein 4A-1 (252 aa).

A signal peptide spans 1–21; sequence MAKNAMLCLLILRVVLALAFA. Residues 21-83 are required for secretion from the host cytoplasm to the host apoplasm; the sequence is ATNKKGDEEP…SNQLPNNNWM (63 aa). Asn32 carries N-linked (GlcNAc...) asparagine glycosylation. Residues 116 to 252 are disordered; the sequence is RKTGMHSQRH…APAGPDPIHH (137 aa). Composition is skewed to basic and acidic residues over residues 125–137 and 144–242; these read HHEETTLEQEKRV and PIHH…EKRG. The A-1 repeat unit spans residues 127-135; the sequence is EETTLEQEK. The interval 127–219 is 6 X approximate repeat A; it reads EETTLEQEKR…HEETTLEQEK (93 aa). Residues 136–147 form a CLE-1 repeat; it reads RVAGAGPDPIHH. The tract at residues 136 to 252 is 6 X approximate repeat CLE; the sequence is RVAGAGPDPI…APAGPDPIHH (117 aa). One copy of the A-2 repeat lies at 148–156; that stretch reads QDTTLEQEK. A CLE-2 repeat occupies 157–168; sequence RAVPAGPDPKHH. The A-3 repeat unit spans residues 169 to 177; the sequence is EETTLEQEK. A CLE-3 repeat occupies 178–189; the sequence is RAVPAGPDPKHH. The stretch at 190-198 is one A-4 repeat; the sequence is EETTLEQEK. One copy of the CLE-4 repeat lies at 199 to 210; it reads RAVPAGPDPKHH. Residues 211–219 form an A-5 repeat; that stretch reads EETTLEQEK. The CLE-5 repeat unit spans residues 220–231; the sequence is RAVPAGPDPKHH. An A-6 repeat occupies 232–240; the sequence is EETTFEQEK. Residues 241–252 form a CLE-6 repeat; that stretch reads RGAPAGPDPIHH.

Belongs to the CLV3/ESR signal peptide family. In terms of tissue distribution, highly expressed exclusively within the dorsal esophageal gland cell during syncytium formation in host plants.

The protein resides in the secreted. It localises to the host cytoplasm. It is found in the host extracellular space. Its subcellular location is the extracellular space. The protein localises to the apoplast. Its function is as follows. Mimics host plant CLE extracellular signal peptides that regulate cell fate. May play a role in the differentiation or division of feeding cells (syncytia) induced in plant roots during infection. The chain is CLAVATA3/ESR (CLE)-related protein 4A-1 (CLE-4A-1) from Globodera rostochiensis (Golden nematode worm).